We begin with the raw amino-acid sequence, 512 residues long: Citrate synthase (512 aa).

Active-site residues include H288, H327, and D383. Residues 483 to 512 (AIPKTATGSKSQLSASIEQSFGEKISPQSH) are disordered. Residues 488 to 501 (ATGSKSQLSASIEQ) show a composition bias toward polar residues.

The protein belongs to the citrate synthase family.

Its subcellular location is the cytoplasm. The enzyme catalyses oxaloacetate + acetyl-CoA + H2O = citrate + CoA + H(+). Its pathway is carbohydrate metabolism; tricarboxylic acid cycle; isocitrate from oxaloacetate: step 1/2. The sequence is that of Citrate synthase (gltA) from Dictyostelium discoideum (Social amoeba).